A 150-amino-acid polypeptide reads, in one-letter code: Troponin C, isoform 2B (150 aa).

Residue Met-1 is modified to N-acetylmethionine. EF-hand domains lie at 7–42 (EQLS…MGVK), 43–78 (ISEK…FLIE), 83–118 (ALKA…LDNR), and 119–150 (LTEE…MMNG). Asp-56, Asp-58, Ser-60, Glu-62, and Glu-67 together coordinate Ca(2+). Positions 132, 134, 136, 138, and 143 each coordinate Ca(2+).

This sequence belongs to the troponin C family.

In terms of biological role, troponin is the central regulatory protein of striated muscle contraction. Tn consists of three components: Tn-I which is the inhibitor of actomyosin ATPase, Tn-T which contains the binding site for tropomyosin and Tn-C. The binding of calcium to Tn-C abolishes the inhibitory action of Tn on actin filaments. The sequence is that of Troponin C, isoform 2B from Homarus americanus (American lobster).